Consider the following 153-residue polypeptide: Ribosome maturation factor RimP (153 aa).

The protein belongs to the RimP family.

It localises to the cytoplasm. Its function is as follows. Required for maturation of 30S ribosomal subunits. The polypeptide is Ribosome maturation factor RimP (Clostridium botulinum (strain Langeland / NCTC 10281 / Type F)).